Consider the following 320-residue polypeptide: Aspartate carbamoyltransferase catalytic subunit (320 aa).

2 residues coordinate carbamoyl phosphate: Arg53 and Thr54. Lys82 is an L-aspartate binding site. Residues Arg103, His131, and Gln134 each coordinate carbamoyl phosphate. Arg164 and Arg227 together coordinate L-aspartate. Carbamoyl phosphate-binding residues include Leu266 and Pro267.

This sequence belongs to the aspartate/ornithine carbamoyltransferase superfamily. ATCase family. In terms of assembly, heterododecamer (2C3:3R2) of six catalytic PyrB chains organized as two trimers (C3), and six regulatory PyrI chains organized as three dimers (R2).

It carries out the reaction carbamoyl phosphate + L-aspartate = N-carbamoyl-L-aspartate + phosphate + H(+). It functions in the pathway pyrimidine metabolism; UMP biosynthesis via de novo pathway; (S)-dihydroorotate from bicarbonate: step 2/3. Its function is as follows. Catalyzes the condensation of carbamoyl phosphate and aspartate to form carbamoyl aspartate and inorganic phosphate, the committed step in the de novo pyrimidine nucleotide biosynthesis pathway. This Bifidobacterium adolescentis (strain ATCC 15703 / DSM 20083 / NCTC 11814 / E194a) protein is Aspartate carbamoyltransferase catalytic subunit.